The chain runs to 491 residues: Probable cytosol aminopeptidase (491 aa).

Mn(2+)-binding residues include K263 and D268. Residue K275 is part of the active site. Mn(2+) contacts are provided by D286, D345, and E347. R349 is an active-site residue.

Belongs to the peptidase M17 family. Requires Mn(2+) as cofactor.

It localises to the cytoplasm. It carries out the reaction Release of an N-terminal amino acid, Xaa-|-Yaa-, in which Xaa is preferably Leu, but may be other amino acids including Pro although not Arg or Lys, and Yaa may be Pro. Amino acid amides and methyl esters are also readily hydrolyzed, but rates on arylamides are exceedingly low.. It catalyses the reaction Release of an N-terminal amino acid, preferentially leucine, but not glutamic or aspartic acids.. Functionally, presumably involved in the processing and regular turnover of intracellular proteins. Catalyzes the removal of unsubstituted N-terminal amino acids from various peptides. The chain is Probable cytosol aminopeptidase from Haemophilus influenzae (strain PittGG).